The sequence spans 127 residues: MSIPNNLRYSEEHEWVKTEGNEVVIGITHFAQGELGDIVFVELPEVGATIEANEPFGSVESVKTVSELYAPVSGKVVAVNEELSDQPELVNESPYEGAWMVKVELSDASQVEKLLTAEKYAEMTNQD.

One can recognise a Lipoyl-binding domain in the interval 22-104; it reads EVVIGITHFA…YEGAWMVKVE (83 aa). Lys-63 carries the post-translational modification N6-lipoyllysine.

Belongs to the GcvH family. The glycine cleavage system is composed of four proteins: P, T, L and H. (R)-lipoate is required as a cofactor.

The glycine cleavage system catalyzes the degradation of glycine. The H protein shuttles the methylamine group of glycine from the P protein to the T protein. Functionally, is also involved in protein lipoylation via its role as an octanoyl/lipoyl carrier protein intermediate. The chain is Glycine cleavage system H protein from Bacillus cereus (strain B4264).